A 206-amino-acid chain; its full sequence is ATP-dependent Clp protease proteolytic subunit (206 aa).

The Nucleophile role is filled by Ser101. The active site involves His126.

The protein belongs to the peptidase S14 family. As to quaternary structure, component of the chloroplastic Clp protease core complex.

The protein resides in the plastid. It localises to the chloroplast stroma. It carries out the reaction Hydrolysis of proteins to small peptides in the presence of ATP and magnesium. alpha-casein is the usual test substrate. In the absence of ATP, only oligopeptides shorter than five residues are hydrolyzed (such as succinyl-Leu-Tyr-|-NHMec, and Leu-Tyr-Leu-|-Tyr-Trp, in which cleavage of the -Tyr-|-Leu- and -Tyr-|-Trp bonds also occurs).. Cleaves peptides in various proteins in a process that requires ATP hydrolysis. Has a chymotrypsin-like activity. Plays a major role in the degradation of misfolded proteins. The polypeptide is ATP-dependent Clp protease proteolytic subunit (Solanum lycopersicum (Tomato)).